Here is a 240-residue protein sequence, read N- to C-terminus: MAEPQEKSLDDFFAKRDKKKKKDKGVSGSAAGSRGSARPPDGAPSSSSSMSGAGKGVKKEKSGKSDNPDQLQEKEDDEWKEFEQKEVDYSGLRIQSLQLSNEKEDDENEKKEEQGADWEETGGYGTDKSSGPWNKTSQAQAPISAVTEAPEPVHTGGVYRPPAARASVSTRKPQGPPEIYSDTQFPSLQATAKHTESRREKEMEKTFEMVKHKNRARDEATKNQALRLQLDNQYAVLGEQ.

Residues 1–15 (MAEPQEKSLDDFFAK) are compositionally biased toward basic and acidic residues. Residues 1–204 (MAEPQEKSLD…TESRREKEME (204 aa)) are disordered. Alanine 2 bears the N-acetylalanine mark. Low complexity predominate over residues 27-52 (SGSAAGSRGSARPPDGAPSSSSSMSG). The span at 57–73 (VKKEKSGKSDNPDQLQE) shows a compositional bias: basic and acidic residues. Polar residues-rich tracts occupy residues 127–141 (DKSS…QAQA) and 181–192 (SDTQFPSLQATA). Basic and acidic residues predominate over residues 193–204 (KHTESRREKEME).

It belongs to the CDV3 family.

It localises to the cytoplasm. The polypeptide is Protein CDV3 homolog A (cdv3-a) (Xenopus laevis (African clawed frog)).